The chain runs to 810 residues: Leucine--tRNA ligase (810 aa).

The 'HIGH' region signature appears at Pro-43 to His-53. Positions Lys-578–Ser-582 match the 'KMSKS' region motif. Residue Lys-581 coordinates ATP.

Belongs to the class-I aminoacyl-tRNA synthetase family.

It is found in the cytoplasm. It catalyses the reaction tRNA(Leu) + L-leucine + ATP = L-leucyl-tRNA(Leu) + AMP + diphosphate. In Solibacter usitatus (strain Ellin6076), this protein is Leucine--tRNA ligase.